A 238-amino-acid polypeptide reads, in one-letter code: Fatty acid metabolism regulator protein (238 aa).

One can recognise an HTH gntR-type domain in the interval 6–74; it reads KGPASFAEKY…HGKPTRVNNF (69 aa). The segment at residues 34 to 53 is a DNA-binding region (H-T-H motif); sequence ERELSELIGVTRTTLREVLQ.

Homodimer.

The protein localises to the cytoplasm. Its function is as follows. Multifunctional regulator of fatty acid metabolism. This Shewanella baltica (strain OS185) protein is Fatty acid metabolism regulator protein.